The chain runs to 644 residues: ATP-dependent zinc metalloprotease FtsH (644 aa).

Topologically, residues 1 to 11 (MNDNKNNTVRN) are stromal. Residues 12 to 32 (LLIGIALLSGISLTAKKFDLI) form a helical membrane-spanning segment. Topologically, residues 33-128 (GVQGSESGKN…FDAHPAEQKN (96 aa)) are lumenal. A helical transmembrane segment spans residues 129–149 (IFVNILSNILLPIIFITGLVY). Over 150-644 (LFQNSENFGG…KNIPYVSKFN (495 aa)) the chain is Stromal. 226–233 (GPPGTGKT) is a binding site for ATP. A Zn(2+)-binding site is contributed by H447. E448 is a catalytic residue. Zn(2+) contacts are provided by H451 and D525.

In the central section; belongs to the AAA ATPase family. The protein in the C-terminal section; belongs to the peptidase M41 family. As to quaternary structure, homohexamer. It depends on Zn(2+) as a cofactor.

It is found in the plastid. It localises to the chloroplast thylakoid membrane. In terms of biological role, acts as a processive, ATP-dependent zinc metallopeptidase. The protein is ATP-dependent zinc metalloprotease FtsH of Trieres chinensis (Marine centric diatom).